Reading from the N-terminus, the 389-residue chain is Galactokinase (389 aa).

Residue 34 to 37 (EHTD) coordinates substrate. ATP-binding positions include S68 and 125 to 131 (GSGLSSS). 2 residues coordinate Mg(2+): S131 and E163. Residue D175 is the Proton acceptor of the active site. Y225 is a substrate binding site.

This sequence belongs to the GHMP kinase family. GalK subfamily.

The protein resides in the cytoplasm. The catalysed reaction is alpha-D-galactose + ATP = alpha-D-galactose 1-phosphate + ADP + H(+). Its pathway is carbohydrate metabolism; galactose metabolism. Its function is as follows. Catalyzes the transfer of the gamma-phosphate of ATP to D-galactose to form alpha-D-galactose-1-phosphate (Gal-1-P). The protein is Galactokinase of Clostridium acetobutylicum (strain ATCC 824 / DSM 792 / JCM 1419 / IAM 19013 / LMG 5710 / NBRC 13948 / NRRL B-527 / VKM B-1787 / 2291 / W).